We begin with the raw amino-acid sequence, 147 residues long: Ubiquitin-conjugating enzyme E2 D4 (147 aa).

The 147-residue stretch at 1–147 folds into the UBC core domain; it reads MALKRIQKEL…AREWTQKYAM (147 aa). Cys85 acts as the Glycyl thioester intermediate in catalysis.

It belongs to the ubiquitin-conjugating enzyme family.

The enzyme catalyses S-ubiquitinyl-[E1 ubiquitin-activating enzyme]-L-cysteine + [E2 ubiquitin-conjugating enzyme]-L-cysteine = [E1 ubiquitin-activating enzyme]-L-cysteine + S-ubiquitinyl-[E2 ubiquitin-conjugating enzyme]-L-cysteine.. The protein operates within protein modification; protein ubiquitination. Accepts ubiquitin from the E1 complex and catalyzes its covalent attachment to other proteins. In vitro able to promote polyubiquitination using all 7 ubiquitin Lys residues, but may prefer 'Lys-11' and 'Lys-48'-linked polyubiquitination. In Homo sapiens (Human), this protein is Ubiquitin-conjugating enzyme E2 D4 (UBE2D4).